The following is a 408-amino-acid chain: Imidazolonepropionase (408 aa).

Residues histidine 73 and histidine 75 each contribute to the Fe(3+) site. Zn(2+)-binding residues include histidine 73 and histidine 75. 4-imidazolone-5-propanoate contacts are provided by arginine 82, tyrosine 145, and histidine 178. Residue tyrosine 145 coordinates N-formimidoyl-L-glutamate. Histidine 243 lines the Fe(3+) pocket. Histidine 243 provides a ligand contact to Zn(2+). Position 246 (glutamine 246) interacts with 4-imidazolone-5-propanoate. Aspartate 318 lines the Fe(3+) pocket. Residue aspartate 318 coordinates Zn(2+). Residues asparagine 320 and glycine 322 each coordinate N-formimidoyl-L-glutamate. A 4-imidazolone-5-propanoate-binding site is contributed by serine 323.

It belongs to the metallo-dependent hydrolases superfamily. HutI family. It depends on Zn(2+) as a cofactor. Fe(3+) serves as cofactor.

The protein resides in the cytoplasm. The catalysed reaction is 4-imidazolone-5-propanoate + H2O = N-formimidoyl-L-glutamate. The protein operates within amino-acid degradation; L-histidine degradation into L-glutamate; N-formimidoyl-L-glutamate from L-histidine: step 3/3. Its function is as follows. Catalyzes the hydrolytic cleavage of the carbon-nitrogen bond in imidazolone-5-propanoate to yield N-formimidoyl-L-glutamate. It is the third step in the universal histidine degradation pathway. The polypeptide is Imidazolonepropionase (Shewanella putrefaciens (strain CN-32 / ATCC BAA-453)).